Reading from the N-terminus, the 318-residue chain is UDP-3-O-acylglucosamine N-acyltransferase (318 aa).

Residue H230 is the Proton acceptor of the active site.

It belongs to the transferase hexapeptide repeat family. LpxD subfamily. As to quaternary structure, homotrimer.

The enzyme catalyses a UDP-3-O-[(3R)-3-hydroxyacyl]-alpha-D-glucosamine + a (3R)-hydroxyacyl-[ACP] = a UDP-2-N,3-O-bis[(3R)-3-hydroxyacyl]-alpha-D-glucosamine + holo-[ACP] + H(+). It participates in bacterial outer membrane biogenesis; LPS lipid A biosynthesis. Its function is as follows. Catalyzes the N-acylation of UDP-3-O-acylglucosamine using 3-hydroxyacyl-ACP as the acyl donor. Is involved in the biosynthesis of lipid A, a phosphorylated glycolipid that anchors the lipopolysaccharide to the outer membrane of the cell. The sequence is that of UDP-3-O-acylglucosamine N-acyltransferase from Wolinella succinogenes (strain ATCC 29543 / DSM 1740 / CCUG 13145 / JCM 31913 / LMG 7466 / NCTC 11488 / FDC 602W) (Vibrio succinogenes).